Here is a 352-residue protein sequence, read N- to C-terminus: 3-dehydroquinate synthase (352 aa).

Residues 60–65 (DGEGAK), 118–119 (TT), Lys-131, Lys-140, and 158–161 (FLET) each bind NAD(+). The Zn(2+) site is built by Glu-173, His-237, and His-253.

The protein belongs to the sugar phosphate cyclases superfamily. Dehydroquinate synthase family. It depends on NAD(+) as a cofactor. Co(2+) serves as cofactor. The cofactor is Zn(2+).

The protein localises to the cytoplasm. It catalyses the reaction 7-phospho-2-dehydro-3-deoxy-D-arabino-heptonate = 3-dehydroquinate + phosphate. It functions in the pathway metabolic intermediate biosynthesis; chorismate biosynthesis; chorismate from D-erythrose 4-phosphate and phosphoenolpyruvate: step 2/7. In terms of biological role, catalyzes the conversion of 3-deoxy-D-arabino-heptulosonate 7-phosphate (DAHP) to dehydroquinate (DHQ). The polypeptide is 3-dehydroquinate synthase (Sulfurisphaera tokodaii (strain DSM 16993 / JCM 10545 / NBRC 100140 / 7) (Sulfolobus tokodaii)).